The chain runs to 321 residues: Porphobilinogen deaminase (321 aa).

C243 carries the S-(dipyrrolylmethanemethyl)cysteine modification.

It belongs to the HMBS family. In terms of assembly, monomer. Dipyrromethane serves as cofactor.

The catalysed reaction is 4 porphobilinogen + H2O = hydroxymethylbilane + 4 NH4(+). Its pathway is porphyrin-containing compound metabolism; protoporphyrin-IX biosynthesis; coproporphyrinogen-III from 5-aminolevulinate: step 2/4. Tetrapolymerization of the monopyrrole PBG into the hydroxymethylbilane pre-uroporphyrinogen in several discrete steps. This is Porphobilinogen deaminase from Histophilus somni (strain 129Pt) (Haemophilus somnus).